The chain runs to 435 residues: GTPase Obg (435 aa).

Positions 6-164 constitute an Obg domain; sequence ADFVDRVKIF…RWLELELKIL (159 aa). The 171-residue stretch at 165–335 folds into the OBG-type G domain; it reads ADVGLVGYPN…LVSKLASIVR (171 aa). Residues 171–178, 196–200, 217–220, 287–290, and 316–318 contribute to the GTP site; these read GYPNVGKS, FTTLI, DIPG, NKID, and SAV. Mg(2+)-binding residues include serine 178 and threonine 198. An OCT domain is found at 357–435; it reads RRLPEKFHLE…IGDFEFEYRE (79 aa).

Belongs to the TRAFAC class OBG-HflX-like GTPase superfamily. OBG GTPase family. Monomer. Mg(2+) is required as a cofactor.

It is found in the cytoplasm. Its function is as follows. An essential GTPase which binds GTP, GDP and possibly (p)ppGpp with moderate affinity, with high nucleotide exchange rates and a fairly low GTP hydrolysis rate. Plays a role in control of the cell cycle, stress response, ribosome biogenesis and in those bacteria that undergo differentiation, in morphogenesis control. The polypeptide is GTPase Obg (Thermotoga maritima (strain ATCC 43589 / DSM 3109 / JCM 10099 / NBRC 100826 / MSB8)).